A 125-amino-acid chain; its full sequence is MPTLEHLTRSPRKKIKRKTKSPALKGCPQKRAICMRVYTTTPKKPNSALRKVTRVRLSSGLEVTAYIPGIGHNLQEHSVVLIRGGRVKDLPGVKYHVIRGCLDAASVKNRKNARSKYGVKKPKPK.

Residues 1–23 (MPTLEHLTRSPRKKIKRKTKSPA) form a disordered region. Residues 9-20 (RSPRKKIKRKTK) are compositionally biased toward basic residues.

The protein belongs to the universal ribosomal protein uS12 family. In terms of assembly, part of the 30S ribosomal subunit.

It localises to the plastid. The protein localises to the chloroplast. With S4 and S5 plays an important role in translational accuracy. Located at the interface of the 30S and 50S subunits. The polypeptide is Small ribosomal subunit protein uS12c (rps12) (Euglena gracilis).